Here is a 363-residue protein sequence, read N- to C-terminus: Protein-arginine kinase (363 aa).

The 232-residue stretch at 24–255 (IVLSSRIRLA…QQLIAQERAA (232 aa)) folds into the Phosphagen kinase C-terminal domain. Residues 27-31 (SSRIR), His92, Arg126, 177-181 (RASVM), and 208-213 (RGTYGE) each bind ATP. An RDXXRA motif of the pArg binding pocket involved in allosteric regulation motif is present at residues 338-343 (RDVRRA).

The protein belongs to the ATP:guanido phosphotransferase family.

It carries out the reaction L-arginyl-[protein] + ATP = N(omega)-phospho-L-arginyl-[protein] + ADP + H(+). Its activity is regulated as follows. Appears to be allosterically activated by the binding of pArg-containing polypeptides to the pArg-binding pocket localized in the C-terminal domain of McsB. Functionally, catalyzes the specific phosphorylation of arginine residues in a large number of proteins. Is part of the bacterial stress response system. Protein arginine phosphorylation has a physiologically important role and is involved in the regulation of many critical cellular processes, such as protein homeostasis, motility, competence, and stringent and stress responses, by regulating gene expression and protein activity. The protein is Protein-arginine kinase of Geobacillus kaustophilus (strain HTA426).